A 206-amino-acid polypeptide reads, in one-letter code: Large ribosomal subunit protein uL3 (206 aa).

A disordered region spans residues 127 to 151 (SGGPSSHGSKFHRHLGGTGQATTPA).

It belongs to the universal ribosomal protein uL3 family. Part of the 50S ribosomal subunit. Forms a cluster with proteins L14 and L19.

Functionally, one of the primary rRNA binding proteins, it binds directly near the 3'-end of the 23S rRNA, where it nucleates assembly of the 50S subunit. The chain is Large ribosomal subunit protein uL3 from Borreliella burgdorferi (strain ZS7) (Borrelia burgdorferi).